A 182-amino-acid chain; its full sequence is uncharacterized protein (182 aa).

The protein to H.pylori HP0274.

This is an uncharacterized protein from Methanocaldococcus jannaschii (strain ATCC 43067 / DSM 2661 / JAL-1 / JCM 10045 / NBRC 100440) (Methanococcus jannaschii).